The primary structure comprises 356 residues: uncharacterized protein (356 aa).

6 helical membrane-spanning segments follow: residues 2 to 22 (FEAF…FHRL), 35 to 55 (AYVT…PIPY), 74 to 94 (FTNM…EIVV), 99 to 119 (IMYG…GPFL), 124 to 144 (VLSL…VALV), and 154 to 174 (IILI…FVDI). A GGDEF domain is found at 218-353 (QSIALLLIDI…GRNKVMFNPI (136 aa)).

The protein resides in the cell membrane. This is an uncharacterized protein from Staphylococcus aureus (strain bovine RF122 / ET3-1).